The primary structure comprises 769 residues: Amino-acid acetyltransferase, mitochondrial (769 aa).

The segment at 150–172 (LKASPAKSGQEPTESPKESISAS) is disordered. Residues 159–172 (QEPTESPKESISAS) show a composition bias toward polar residues. Residues 590-759 (MQPRLGLNDP…YEAVCRSIQP (170 aa)) enclose the N-acetyltransferase domain.

It belongs to the acetyltransferase family.

It is found in the mitochondrion. It carries out the reaction L-glutamate + acetyl-CoA = N-acetyl-L-glutamate + CoA + H(+). It functions in the pathway amino-acid biosynthesis; L-arginine biosynthesis; N(2)-acetyl-L-ornithine from L-glutamate: step 1/4. In terms of biological role, N-acetylglutamate synthase involved in arginine biosynthesis. The chain is Amino-acid acetyltransferase, mitochondrial (arg2) from Penicillium rubens (strain ATCC 28089 / DSM 1075 / NRRL 1951 / Wisconsin 54-1255) (Penicillium chrysogenum).